The following is a 446-amino-acid chain: tRNA-2-methylthio-N(6)-dimethylallyladenosine synthase (446 aa).

The region spanning 3–120 (KKLFIETHGC…LPEMIDAARS (118 aa)) is the MTTase N-terminal domain. Cys12, Cys49, Cys83, Cys157, Cys161, and Cys164 together coordinate [4Fe-4S] cluster. Residues 143–375 (RVDGPTAFVS…QGRIHQQGYE (233 aa)) form the Radical SAM core domain. The region spanning 378-442 (RRMVGSTQRI…PHSLRGTLIE (65 aa)) is the TRAM domain.

Belongs to the methylthiotransferase family. MiaB subfamily. As to quaternary structure, monomer. It depends on [4Fe-4S] cluster as a cofactor.

The protein resides in the cytoplasm. It carries out the reaction N(6)-dimethylallyladenosine(37) in tRNA + (sulfur carrier)-SH + AH2 + 2 S-adenosyl-L-methionine = 2-methylsulfanyl-N(6)-dimethylallyladenosine(37) in tRNA + (sulfur carrier)-H + 5'-deoxyadenosine + L-methionine + A + S-adenosyl-L-homocysteine + 2 H(+). In terms of biological role, catalyzes the methylthiolation of N6-(dimethylallyl)adenosine (i(6)A), leading to the formation of 2-methylthio-N6-(dimethylallyl)adenosine (ms(2)i(6)A) at position 37 in tRNAs that read codons beginning with uridine. The chain is tRNA-2-methylthio-N(6)-dimethylallyladenosine synthase from Pseudomonas paraeruginosa (strain DSM 24068 / PA7) (Pseudomonas aeruginosa (strain PA7)).